A 129-amino-acid polypeptide reads, in one-letter code: Glycine cleavage system H protein (129 aa).

Positions 24 to 106 (SYTVGITEHA…YGEGWFFRVM (83 aa)) constitute a Lipoyl-binding domain. Position 65 is an N6-lipoyllysine (Lys-65).

This sequence belongs to the GcvH family. In terms of assembly, the glycine cleavage system is composed of four proteins: P, T, L and H. Requires (R)-lipoate as cofactor.

The glycine cleavage system catalyzes the degradation of glycine. The H protein shuttles the methylamine group of glycine from the P protein to the T protein. The sequence is that of Glycine cleavage system H protein from Shewanella baltica (strain OS185).